The primary structure comprises 142 residues: MKTFSAKAHEVKRDWLLVDADGKILGRFATQIASRLRGKHKPEYTPHTDTGDYIVIINASKIKVTGNKFEDKMYHHHTGYVGNLKSIAFKDLQAKKPEEIINKVVKGMLPKGPLGRDMFRKMKVFAGSEHTHGAQQPQVLDI.

The protein belongs to the universal ribosomal protein uL13 family. Part of the 50S ribosomal subunit.

This protein is one of the early assembly proteins of the 50S ribosomal subunit, although it is not seen to bind rRNA by itself. It is important during the early stages of 50S assembly. This chain is Large ribosomal subunit protein uL13, found in Ruthia magnifica subsp. Calyptogena magnifica.